Reading from the N-terminus, the 830-residue chain is MEKWARIKYTPNLPLGENGERVTASQKHIELSCEAACEGMVLLKNDRNVLPIRKGTRVALFGKGVFDYVKGGGGSGDVTVPYIRNLYEGLSQYTSDISIYDKSVRFYQEYVADQYRLGIAPGMIKEPALPEDILADAAAYADTAIIAISRFSGEGWDRKVAGVDREIKCEAKDLVEQGNKIFDHGDFYLTNAEKKMVKMVKENFSSVIVVMNVGGVVDTTWFKKDDQISSVLMAWQGGIEGGLAAARILLGKVNPSGKLSDTFAARLEDYPSTEGFHEDDDYVDYTEDIYVGYRYFETIPGAKEKVNYPFGYGLSYTTFLLEDYKAEPFVASAADEVGKSDSDLADAIVASVTVTNIGKIPGKEVVQLYYSAPQGKLGKPAKVLGGYAKTRLLQPGESQRVTIALYMEDMASYDDLGKVKKAAWLLEKGEYHFFLGTSVRDTRLLDYTYELSKNIIVEQVSNKLVPTSLPKRMLADGTYEELPQTEPVDTYATIFPRPKNWKETIEHDVLKTPVVRPQDRFQLFLPPKEGDPKKFIEVAECKVTLEDFIAQLSNEQLASLLGGQPNVGMANTFGYGNLPEVGVPNAQTCDGPAGVRIAPEVGVVTTAFPCSTLLACTWNEDICYEVGVAGGEEAKECNFGAWLTPAVNIHRSPLCGRNFEYYSEDPFLAGKQAAAMVRGIQSNNIIATPKHFALNNKESNRKGSDSRASERAIREIYLKAFEIIVKEQSPGASCLQYNIVNGQRSSESHDLLTGILRDEWGFEGVVVSDWWGFGEHYKEVLAGNDIKMGCGYTEQLLEAIDKKALKRKDLEKRQSESSRCFSNSTKLKAA.

Residue Asp769 is part of the active site.

The protein belongs to the glycosyl hydrolase 3 family.

The enzyme catalyses Hydrolysis of terminal, non-reducing beta-D-glucosyl residues with release of beta-D-glucose.. Functionally, b.fibrisolvens beta-glucosidase hydrolyzes cellobiose to a limited extent, cellotriose to cellobiose and glucose, and cellotetraose and cellopentaose to predominantly glucose. This is Beta-glucosidase A (bglA) from Butyrivibrio fibrisolvens.